Here is a 513-residue protein sequence, read N- to C-terminus: Protein indeterminate-domain 11 (513 aa).

Positions 1–84 are disordered; it reads MMNKDMLLHQ…QPGNPDPESE (84 aa). A compositionally biased stretch (polar residues) spans 10-45; it reads QHQQPQQDENMSNLTSASGDQASVSSGNITEASGSN. Over residues 51–60 the composition is skewed to low complexity; the sequence is QQQQEQQQQQ. Serine 89 carries the phosphoserine modification. C2H2-type zinc fingers lie at residues 99–121 and 141–171; these read FVCE…RRGH and YVCP…CRKH. The short motif at 163–170 is the Nuclear localization signal element; it reads IKKHFCRK. A C2H2-type 2; degenerate zinc finger spans residues 176–199; that stretch reads WKCDKCSKKYAVQSDCKAHSKTCG. Positions 178, 181, 194, 198, 205, 207, 220, and 224 each coordinate Zn(2+). The CCHC-type 2; atypical zinc finger occupies 203–226; sequence YRCDCGTLFSRRDSFITHRAFCEA. The segment at 213 to 225 is SHR-binding; that stretch reads RRDSFITHRAFCE. Disordered stretches follow at residues 255 to 280 and 334 to 358; these read ASHP…SHNH and PQPH…SLFS. Over residues 264–280 the composition is skewed to low complexity; the sequence is TQPTINVSSSSSSSHNH.

The protein resides in the nucleus. In terms of biological role, probable transcription factor. The chain is Protein indeterminate-domain 11 from Arabidopsis thaliana (Mouse-ear cress).